We begin with the raw amino-acid sequence, 383 residues long: Micronemal protein 3 (383 aa).

A signal peptide spans 1–26; the sequence is MRGGTSALLHALTFSGAVWMCTPAEA. Positions 27 to 66 are cleaved as a propeptide — required for proper sorting to micronemes; sequence LPIQKSVQLGSFDKVVPSREVVSESLAPSFAVTETHSSVQ. The interval 67–145 is lectin-like; required for the binding of host cells; that stretch reads SPSKQETQLC…HPDKSYGGDC (79 aa). Required for proper sorting to micronemes stretches follow at residues 146 to 189, 190 to 236, and 237 to 290; these read SCEK…SEDP, CSKR…KRTG, and CHAF…LAEK. The EGF-like domain occupies 186–227; it reads SEDPCSKRGNAKCGPNGTCIVVDSVSYTCTCGDGETLVNLPE. Disulfide bonds link Cys-190-Cys-204 and Cys-198-Cys-214. A glycan (N-linked (GlcNAc...) asparagine) is linked at Asn-201. Residues 294–359 form an involved in dimerization region; sequence EFGISASSCK…HTVTCEKIKH (66 aa).

In terms of assembly, homodimer; dimerization is likely required for host cell binding but not for trafficking to micronemes. Post-translationally, removal of the propeptide occurs in a post-medial-Golgi compartment. Removal of the propeptide is required for the host cell binding. The presence of propeptide does not affect dimerization. The presence of propeptide does not affect sorting to micronemes.

The protein localises to the cytoplasmic vesicle. It is found in the secretory vesicle. It localises to the microneme. Its subcellular location is the secreted. The protein resides in the golgi apparatus. The protein localises to the endoplasmic reticulum. Adhesin; can bind both the host cells and the parasites. May be involved in parasite invasion by acting as a bridge between the parasite and the host cell. Triggers innate immune responses in mouse macrophages via the TLR11/MyD88/NF-kappa-B pathway. Induces TNF/TNF-alpha secretion in mouse macrophages. Induces secretion of IL6 in mouse and human macrophages likely via different mechanisms. Up-regulates expression of NOS2/iNOS in mouse macrophages. Induces mouse macrophage polarization. The polypeptide is Micronemal protein 3 (Toxoplasma gondii).